Reading from the N-terminus, the 213-residue chain is Imidazole glycerol phosphate synthase subunit HisH (213 aa).

Residues 4–213 (SIAIVDYGMG…LYRNFVHWKP (210 aa)) enclose the Glutamine amidotransferase type-1 domain. Residue cysteine 83 is the Nucleophile of the active site. Catalysis depends on residues histidine 193 and glutamate 195.

Heterodimer of HisH and HisF.

It is found in the cytoplasm. The enzyme catalyses 5-[(5-phospho-1-deoxy-D-ribulos-1-ylimino)methylamino]-1-(5-phospho-beta-D-ribosyl)imidazole-4-carboxamide + L-glutamine = D-erythro-1-(imidazol-4-yl)glycerol 3-phosphate + 5-amino-1-(5-phospho-beta-D-ribosyl)imidazole-4-carboxamide + L-glutamate + H(+). The catalysed reaction is L-glutamine + H2O = L-glutamate + NH4(+). It participates in amino-acid biosynthesis; L-histidine biosynthesis; L-histidine from 5-phospho-alpha-D-ribose 1-diphosphate: step 5/9. Its function is as follows. IGPS catalyzes the conversion of PRFAR and glutamine to IGP, AICAR and glutamate. The HisH subunit catalyzes the hydrolysis of glutamine to glutamate and ammonia as part of the synthesis of IGP and AICAR. The resulting ammonia molecule is channeled to the active site of HisF. The protein is Imidazole glycerol phosphate synthase subunit HisH of Burkholderia lata (strain ATCC 17760 / DSM 23089 / LMG 22485 / NCIMB 9086 / R18194 / 383).